Consider the following 531-residue polypeptide: Anthranilate synthase component 1 (531 aa).

L-tryptophan is bound by residues Ser-56 and 284-286 (PYM). A chorismate-binding site is contributed by 324–325 (GS). Position 351 (Glu-351) interacts with Mg(2+). Residues Tyr-439, Arg-459, 473 to 475 (GGG), and Gly-475 each bind chorismate. Glu-488 is a binding site for Mg(2+). The tract at residues 506–531 (LHNITPDSVSAPDSVSSPDSVTEANS) is disordered. Low complexity predominate over residues 511-531 (PDSVSAPDSVSSPDSVTEANS).

Belongs to the anthranilate synthase component I family. In terms of assembly, heterotetramer consisting of two non-identical subunits: a beta subunit (TrpG) and a large alpha subunit (TrpE). Mg(2+) is required as a cofactor.

It catalyses the reaction chorismate + L-glutamine = anthranilate + pyruvate + L-glutamate + H(+). The protein operates within amino-acid biosynthesis; L-tryptophan biosynthesis; L-tryptophan from chorismate: step 1/5. Feedback inhibited by tryptophan. In terms of biological role, part of a heterotetrameric complex that catalyzes the two-step biosynthesis of anthranilate, an intermediate in the biosynthesis of L-tryptophan. In the first step, the glutamine-binding beta subunit (TrpG) of anthranilate synthase (AS) provides the glutamine amidotransferase activity which generates ammonia as a substrate that, along with chorismate, is used in the second step, catalyzed by the large alpha subunit of AS (TrpE) to produce anthranilate. In the absence of TrpG, TrpE can synthesize anthranilate directly from chorismate and high concentrations of ammonia. This chain is Anthranilate synthase component 1 (trpE), found in Arthrobacter globiformis.